Consider the following 144-residue polypeptide: Bradykinin-potentiating and C-type natriuretic peptides isoform 2 (144 aa).

An N-terminal signal peptide occupies residues 1 to 23 (MVLSRLAASGLLLLALLALSVDG). Residues 24–30 (KPVQQWA) constitute a propeptide that is removed on maturation. The residue at position 31 (Q31) is a Pyrrolidone carboxylic acid. The propeptide occupies 41 to 47 (LLVQQWA). The residue at position 48 (Q48) is a Pyrrolidone carboxylic acid. The propeptide occupies 61 to 67 (LTVQQWA). Q68 carries the pyrrolidone carboxylic acid modification. Positions 78-84 (LTVQQWA) are excised as a propeptide. The disordered stretch occupies residues 81-110 (QQWAQGRPPGPPIPPLTVQQWAQARPPHPP). Q85 carries the post-translational modification Pyrrolidone carboxylic acid. Positions 96–102 (LTVQQWA) are excised as a propeptide. Q103 carries the pyrrolidone carboxylic acid modification. Residues 114 to 116 (APL) constitute a propeptide that is removed on maturation. A Pyrrolidone carboxylic acid modification is found at Q117. Residue V122 is a propeptide. A Pyrrolidone carboxylic acid modification is found at Q123. A propeptide spanning residues 128 to 144 (VQKWAPVQKWAPLLQPT) is cleaved from the precursor.

The protein in the N-terminal section; belongs to the bradykinin-potentiating peptide family. In terms of tissue distribution, expressed by venom gland.

It is found in the secreted. Its subcellular location is the cytoplasm. The protein resides in the cytosol. Peptide with several activities. It inhibits the activity of the angiotensin-converting enzyme (ACE) by a preferential interaction with its C-domain. It evokes transient hypotension (-14 mmHg) similar to that evoked by 0.5 ug of bradykinin, when injected alone into rats. It has a high bradykinin-potentiating effect (120%), when 60 nmol of BPP-10c are coinjected with 0.5 ug of bradykinin into rats. Does not affect angiotensin-1 pressor effects. Shows potent and long-lasting antihypertensive activity as well as a reduction of the heart rate. It also binds and dose-dependently promotes the activation of cytosolic argininosuccinate synthase (ASS1), an enzyme that catalyzes the conversion of citrulline, L-aspartate and ATP to argininosuccinate, AMP and pyrophosphate. It also enhances ASS1-dependent arginine production in HEK 293 cells, as well as in spontaneous hypertensive rat (SHR) and Wistar rat plasma. In addition, it induces the production of nitric-oxide (NO) by HUVEC cells via the endothelial nitric-oxide synthase (NOS3), which use arginine as a substrate and produce NO. It has been shown to be internalized by ASS1-expressing endothelial (HUVEC) and kidney (HEK 293) cells, and is detected homogenously distributed within the cell cytoplasm for up to 2 hours. Functionally, acts as indirect hypotensive agent. Increases leukocyte rolling flux and adhesion by five-fold in post-capillary venules, without any increments in vasodilation of arterioles. Its function is as follows. Acts as indirect hypotensive agent. Potently induces vasodilation of arterioles, with only a small increase in leukocyte rolling flux. The chain is Bradykinin-potentiating and C-type natriuretic peptides isoform 2 from Bothrops jararacussu (Jararacussu).